The sequence spans 185 residues: Lipid A acyltransferase PagP (185 aa).

The signal sequence occupies residues 1–24; it reads MKTHNDILAALAALPLFLTGAAFA. Residues His-57, Asp-100, and Ser-101 contribute to the active site.

Belongs to the lipid A palmitoyltransferase family. As to quaternary structure, homodimer.

It localises to the cell outer membrane. The catalysed reaction is a lipid A + a 1,2-diacyl-sn-glycero-3-phosphocholine = a hepta-acyl lipid A + a 2-acyl-sn-glycero-3-phosphocholine. The enzyme catalyses a lipid IVA + a 1,2-diacyl-sn-glycero-3-phosphocholine = a lipid IVB + a 2-acyl-sn-glycero-3-phosphocholine. It catalyses the reaction a lipid IIA + a 1,2-diacyl-sn-glycero-3-phosphocholine = a lipid IIB + a 2-acyl-sn-glycero-3-phosphocholine. In terms of biological role, transfers a fatty acid residue from the sn-1 position of a phospholipid to the N-linked hydroxyfatty acid chain on the proximal unit of lipid A or its precursors. This chain is Lipid A acyltransferase PagP, found in Edwardsiella tarda (strain FL6-60).